The chain runs to 62 residues: Photosystem II reaction center protein Z (62 aa).

2 helical membrane passes run 8-28 (ALAA…VAYA) and 41-61 (FLGS…NFLV).

It belongs to the PsbZ family. PSII is composed of 1 copy each of membrane proteins PsbA, PsbB, PsbC, PsbD, PsbE, PsbF, PsbH, PsbI, PsbJ, PsbK, PsbL, PsbM, PsbT, PsbX, PsbY, PsbZ, Psb30/Ycf12, peripheral proteins PsbO, CyanoQ (PsbQ), PsbU, PsbV and a large number of cofactors. It forms dimeric complexes.

It localises to the cellular thylakoid membrane. May control the interaction of photosystem II (PSII) cores with the light-harvesting antenna, regulates electron flow through the 2 photosystem reaction centers. PSII is a light-driven water plastoquinone oxidoreductase, using light energy to abstract electrons from H(2)O, generating a proton gradient subsequently used for ATP formation. The polypeptide is Photosystem II reaction center protein Z (Cyanothece sp. (strain PCC 7425 / ATCC 29141)).